A 251-amino-acid chain; its full sequence is Probable transcriptional regulatory protein DehaBAV1_0421 (251 aa).

The protein belongs to the TACO1 family.

It localises to the cytoplasm. The chain is Probable transcriptional regulatory protein DehaBAV1_0421 from Dehalococcoides mccartyi (strain ATCC BAA-2100 / JCM 16839 / KCTC 5957 / BAV1).